A 347-amino-acid polypeptide reads, in one-letter code: 4-hydroxy-2-oxovalerate aldolase 2 (347 aa).

The Pyruvate carboxyltransferase domain maps to 7-259 (VRITDTSLRD…KTGIDFFDIA (253 aa)). 15-16 (RD) contributes to the substrate binding site. Asp-16 is a binding site for Mn(2+). The active-site Proton acceptor is the His-19. Positions 169 and 198 each coordinate substrate. Residues His-198 and His-200 each contribute to the Mn(2+) site. Position 289 (Tyr-289) interacts with substrate.

It belongs to the 4-hydroxy-2-oxovalerate aldolase family.

It carries out the reaction (S)-4-hydroxy-2-oxopentanoate = acetaldehyde + pyruvate. The protein is 4-hydroxy-2-oxovalerate aldolase 2 of Mycobacterium marinum (strain ATCC BAA-535 / M).